Consider the following 74-residue polypeptide: Hadrucalcin (74 aa).

The first 27 residues, 1 to 27 (MKTSSLTIIFIAVIITIICLNIHDIEA), serve as a signal peptide directing secretion. Residues 28-39 (REIEFNAGRVVR) constitute a propeptide that is removed on maturation. Cystine bridges form between C44/C58, C51/C62, and C57/C73. The interval 64–65 (RR) is essential for stimulation of [3H]ryanodine binding to RYR1.

In terms of tissue distribution, expressed by the venom gland.

It localises to the secreted. This toxin activates ryanodine receptors RyR1 and RyR2 by inducing a long-lasting subconductance state (35% of the full conductance stateon RyR1). Furthermore, it triggers calcium release from sarcoplasmic vesicles (11.8 nM are enough to induce a sharp release on RyR1, and 55% of the total calcium is released after toxin (100 nM) addition on RyR1) probably by acting as a cell-penetrating peptide (CPP). In addition, it has been shown to dose-dependently stimulate ryanodine binding to RyR1 (EC(50)=14.8 nM). It also augments the bell-shaped calcium-[3H]ryanodine binding curve that is maximal at about 10 uM calcium concentration. It binds a different site as ryanodine. It acts synergistically with caffeine. In vivo, intracerebroventricular injection into mice induces neurotoxic symptoms, followed by death. This Hoffmannihadrurus gertschi (Scorpion) protein is Hadrucalcin.